A 307-amino-acid chain; its full sequence is Small ribosomal subunit biogenesis GTPase RsgA (307 aa).

The interval 1 to 21 (MPSEHPFSDGIPTPNPKETMN) is disordered. The 158-residue stretch at 85–242 (RQDAWKTKLI…LIDSPGLQEF (158 aa)) folds into the CP-type G domain. GTP is bound by residues 135-138 (NKAD) and 184-192 (GQSGMGKST). Residues Cys266, Cys271, His273, and Cys279 each coordinate Zn(2+).

It belongs to the TRAFAC class YlqF/YawG GTPase family. RsgA subfamily. As to quaternary structure, monomer. Associates with 30S ribosomal subunit, binds 16S rRNA. Zn(2+) is required as a cofactor.

Its subcellular location is the cytoplasm. In terms of biological role, one of several proteins that assist in the late maturation steps of the functional core of the 30S ribosomal subunit. Helps release RbfA from mature subunits. May play a role in the assembly of ribosomal proteins into the subunit. Circularly permuted GTPase that catalyzes slow GTP hydrolysis, GTPase activity is stimulated by the 30S ribosomal subunit. In Neisseria meningitidis serogroup B (strain ATCC BAA-335 / MC58), this protein is Small ribosomal subunit biogenesis GTPase RsgA.